A 689-amino-acid chain; its full sequence is Protein SDA1 homolog (689 aa).

The stretch at Lys-254–Asp-319 forms a coiled coil. Disordered stretches follow at residues Glu-485–Trp-512 and Lys-606–Lys-689. Residues Ser-668–Leu-681 show a composition bias toward basic and acidic residues.

The protein belongs to the SDA1 family.

It localises to the nucleus. It is found in the nucleolus. Required for 60S pre-ribosomal subunits export to the cytoplasm. This Xenopus tropicalis (Western clawed frog) protein is Protein SDA1 homolog (sdad1).